We begin with the raw amino-acid sequence, 229 residues long: MDSKVSSQKGSRLLLLLVVSNLLLCQGVVSTPVCPNGAGNCQVSLRDLFDRAVMVSHYIHNLSSEMFNEFDKRYAQGKGFITMALNSCHTSSLPTPEDKEQAQQTHHEVLMSLILGLLRSWNDPLYHLVTEVRGMKGAPDGILSRAIEIEEENKRLLEGMEMIFGQVLPGAKETEPYPVWSGLPSLQTKDEDARYSAFYNLLHCLRRDSSKIDTYLKLLNCRIIYNNNC.

The signal sequence occupies residues 1–30; that stretch reads MDSKVSSQKGSRLLLLLVVSNLLLCQGVVS. Cysteines 34 and 41 form a disulfide. 3 positions are modified to phosphoserine: S56, S64, and S120. 2 cysteine pairs are disulfide-bonded: C88–C204 and C221–C229.

The protein belongs to the somatotropin/prolactin family. In terms of assembly, interacts with PRLR.

The protein localises to the secreted. Functionally, prolactin acts primarily on the mammary gland by promoting lactation. The sequence is that of Prolactin (PRL) from Cervus elaphus (Red deer).